Reading from the N-terminus, the 20-residue chain is Equinatoxin-3 (20 aa).

The tract at residues Ala3–Ala12 is plays an important role in the hemolytic activity. The interval Gly11–Gln20 is N-terminal region.

The protein belongs to the actinoporin family. Sea anemone subfamily. In terms of assembly, octamer or nonamer in membranes. Monomer in the soluble state.

It localises to the secreted. It is found in the nematocyst. Its subcellular location is the target cell membrane. Its function is as follows. Pore-forming protein that forms cations-selective hydrophilic pores of around 1 nm and causes cardiac stimulation and cytolysis. Pore formation is a multi-step process that involves specific recognition of membrane sphingomyelin (but neither cholesterol nor phosphatidylcholine) using aromatic rich region and adjacent phosphocholine (POC) binding site, firm binding to the membrane (mainly driven by hydrophobic interactions) accompanied by the transfer of the N-terminal region to the lipid-water interface and finally pore formation after oligomerization of monomers. Cytolytic effects include red blood cells hemolysis, platelet aggregation and lysis, cytotoxic and cytostatic effects on fibroblasts. Lethality in mammals has been ascribed to severe vasospasm of coronary vessels, cardiac arrhythmia, and inotropic effects. The sequence is that of Equinatoxin-3 from Actinia equina (Beadlet anemone).